Reading from the N-terminus, the 256-residue chain is Imidazole glycerol phosphate synthase subunit HisF (256 aa).

Residues D11 and D130 contribute to the active site.

Belongs to the HisA/HisF family. In terms of assembly, heterodimer of HisH and HisF.

It is found in the cytoplasm. It carries out the reaction 5-[(5-phospho-1-deoxy-D-ribulos-1-ylimino)methylamino]-1-(5-phospho-beta-D-ribosyl)imidazole-4-carboxamide + L-glutamine = D-erythro-1-(imidazol-4-yl)glycerol 3-phosphate + 5-amino-1-(5-phospho-beta-D-ribosyl)imidazole-4-carboxamide + L-glutamate + H(+). It participates in amino-acid biosynthesis; L-histidine biosynthesis; L-histidine from 5-phospho-alpha-D-ribose 1-diphosphate: step 5/9. Functionally, IGPS catalyzes the conversion of PRFAR and glutamine to IGP, AICAR and glutamate. The HisF subunit catalyzes the cyclization activity that produces IGP and AICAR from PRFAR using the ammonia provided by the HisH subunit. The sequence is that of Imidazole glycerol phosphate synthase subunit HisF from Synechococcus sp. (strain CC9605).